Consider the following 335-residue polypeptide: Fructose-1,6-bisphosphatase class 1 (335 aa).

Residues Glu92, Asp115, Leu117, and Asp118 each contribute to the Mg(2+) site. Substrate contacts are provided by residues 118 to 121 (DGSS), Asn211, Tyr244, 262 to 264 (YLY), and Lys274. Glu280 serves as a coordination point for Mg(2+).

The protein belongs to the FBPase class 1 family. As to quaternary structure, homotetramer. Requires Mg(2+) as cofactor.

It is found in the cytoplasm. The catalysed reaction is beta-D-fructose 1,6-bisphosphate + H2O = beta-D-fructose 6-phosphate + phosphate. It participates in carbohydrate biosynthesis; gluconeogenesis. This Teredinibacter turnerae (strain ATCC 39867 / T7901) protein is Fructose-1,6-bisphosphatase class 1.